The primary structure comprises 394 residues: Glycogen synthase kinase 1 (394 aa).

The 284-residue stretch at 35–318 (YTQCKIVGNG…AIDAMVHPFF (284 aa)) folds into the Protein kinase domain. ATP-binding positions include 41-49 (VGNGSFGVV) and Lys64.

It belongs to the protein kinase superfamily. CMGC Ser/Thr protein kinase family. GSK-3 subfamily.

Its subcellular location is the cytoplasm. It catalyses the reaction L-seryl-[protein] + ATP = O-phospho-L-seryl-[protein] + ADP + H(+). Its function is as follows. Protein kinase that acts downstream of the MPS1 MAPK cascade as a highly conservative signal modulator that dictates growth, conidiation and pathogenicity. Phosphorylates HAT1 at 'Ser-8' to block its translocation from the nucleus to the cytoplasm where HAT1 positively regulates appressorium development and pathogenicity. In Pyricularia oryzae (Rice blast fungus), this protein is Glycogen synthase kinase 1.